Here is a 264-residue protein sequence, read N- to C-terminus: Anamorsin homolog 2 (264 aa).

An N-terminal SAM-like domain region spans residues 1 to 142 (MAATAAALAV…KVSWSMGSSF (142 aa)). A linker region spans residues 143–174 (PLKKATKGLPKIQIDDDSELIDEDSLLTEDDL). Residues Cys185, Cys194, Cys197, and Cys199 each contribute to the [2Fe-2S] cluster site. A fe-S binding site A region spans residues 185-199 (CEVGATRKACKNCTC). [4Fe-4S] cluster-binding residues include Cys225, Cys228, Cys236, and Cys239. 2 short sequence motifs (cx2C motif) span residues 225-228 (CGNC) and 236-239 (CGTC). The tract at residues 225 to 239 (CGNCGLGDAFRCGTC) is fe-S binding site B.

The protein belongs to the anamorsin family. Monomer. [2Fe-2S] cluster is required as a cofactor. Requires [4Fe-4S] cluster as cofactor.

Its subcellular location is the cytoplasm. The protein localises to the mitochondrion intermembrane space. Functionally, component of the cytosolic iron-sulfur (Fe-S) protein assembly (CIA) machinery. Required for the maturation of extramitochondrial Fe-S proteins. Part of an electron transfer chain functioning in an early step of cytosolic Fe-S biogenesis, facilitating the de novo assembly of a [4Fe-4S] cluster on the cytosolic Fe-S scaffold complex. Electrons are transferred from NADPH via a FAD- and FMN-containing diflavin oxidoreductase. Together with the diflavin oxidoreductase, also required for the assembly of the diferric tyrosyl radical cofactor of ribonucleotide reductase (RNR), probably by providing electrons for reduction during radical cofactor maturation in the catalytic small subunit. In Oryza sativa subsp. indica (Rice), this protein is Anamorsin homolog 2.